Reading from the N-terminus, the 237-residue chain is Sulfolipid-1 exporter Sap (237 aa).

6 helical membrane-spanning segments follow: residues 5-25 (VLVL…VVLM), 38-58 (FLCG…VVLG), 66-86 (FSVA…AFAL), 141-161 (VSGL…AAIL), 171-191 (ALAV…PLVS), and 217-237 (DAAL…LSNL).

Belongs to the peptidoglycolipid addressing protein (GAP) (TC 2.A.116) family.

Its subcellular location is the cell inner membrane. Required for the transport across the inner membrane of sulfolipid-1 (SL-1), which is a major cell wall lipid of pathogenic mycobacteria. Could also transport SL1278 (2-palmitoyl-3-(C43)-phthioceranyl-alpha, alpha'-D-trehalose-2'-sulfate), which is the precursor of SL-1. May potentiate SL-1 levels and confer specificity for sulfolipids over structurally similar glycolipids. The chain is Sulfolipid-1 exporter Sap from Mycobacterium tuberculosis (strain ATCC 25618 / H37Rv).